The chain runs to 218 residues: Ribose-5-phosphate isomerase A (218 aa).

Residues 28–31 (TGST), 81–84 (DGAD), and 94–97 (KGGG) each bind substrate. The Proton acceptor role is filled by Glu-103. A substrate-binding site is contributed by Lys-121.

The protein belongs to the ribose 5-phosphate isomerase family. As to quaternary structure, homodimer.

The enzyme catalyses aldehydo-D-ribose 5-phosphate = D-ribulose 5-phosphate. It participates in carbohydrate degradation; pentose phosphate pathway; D-ribose 5-phosphate from D-ribulose 5-phosphate (non-oxidative stage): step 1/1. Its function is as follows. Catalyzes the reversible conversion of ribose-5-phosphate to ribulose 5-phosphate. In Vibrio campbellii (strain ATCC BAA-1116), this protein is Ribose-5-phosphate isomerase A.